The primary structure comprises 607 residues: Glutamine--fructose-6-phosphate aminotransferase [isomerizing] (607 aa).

Catalysis depends on C2, which acts as the Nucleophile; for GATase activity. Residues 2-218 form the Glutamine amidotransferase type-2 domain; that stretch reads CGIIGYSGSK…DGDVVLVTKD (217 aa). 2 SIS domains span residues 280–424 and 457–597; these read FDEQ…KLGK and IAKK…VDKP. K602 acts as the For Fru-6P isomerization activity in catalysis.

In terms of assembly, homodimer.

The protein localises to the cytoplasm. It catalyses the reaction D-fructose 6-phosphate + L-glutamine = D-glucosamine 6-phosphate + L-glutamate. In terms of biological role, catalyzes the first step in hexosamine metabolism, converting fructose-6P into glucosamine-6P using glutamine as a nitrogen source. In Fusobacterium nucleatum subsp. nucleatum (strain ATCC 25586 / DSM 15643 / BCRC 10681 / CIP 101130 / JCM 8532 / KCTC 2640 / LMG 13131 / VPI 4355), this protein is Glutamine--fructose-6-phosphate aminotransferase [isomerizing].